The sequence spans 253 residues: Sulfoacetaldehyde reductase (253 aa).

Residue 6-30 (FITGATSGFGRAAAHRFAAAGWSLV) participates in NADP(+) binding. Serine 139 is a binding site for substrate. Catalysis depends on tyrosine 152, which acts as the Proton acceptor.

Belongs to the short-chain dehydrogenases/reductases (SDR) family. Homodimer and heterotetramer.

The catalysed reaction is 2-hydroxyethane-1-sulfonate + NADP(+) = sulfoacetaldehyde + NADPH + H(+). It participates in organosulfur degradation. Functionally, catalyzes the formation of isethionate from 2-sulfoacetaldehyde in the deaminative pathway of taurine. The enzyme is specific for NADPH; NADH is not a substrate. Responsible for most of the activity observed in taurine-grown cells. The protein is Sulfoacetaldehyde reductase (isfD) of Chromohalobacter salexigens (strain ATCC BAA-138 / DSM 3043 / CIP 106854 / NCIMB 13768 / 1H11).